A 90-amino-acid polypeptide reads, in one-letter code: Large ribosomal subunit protein uL23c (90 aa).

Belongs to the universal ribosomal protein uL23 family. In terms of assembly, part of the 50S ribosomal subunit.

Its subcellular location is the plastid. The protein localises to the chloroplast. Binds to 23S rRNA. The chain is Large ribosomal subunit protein uL23c (rpl23) from Tetradesmus obliquus (Green alga).